A 184-amino-acid polypeptide reads, in one-letter code: Crossover junction endodeoxyribonuclease RuvC (184 aa).

Residues D7, E68, and D141 contribute to the active site. D7, E68, and D141 together coordinate Mg(2+).

The protein belongs to the RuvC family. Homodimer which binds Holliday junction (HJ) DNA. The HJ becomes 2-fold symmetrical on binding to RuvC with unstacked arms; it has a different conformation from HJ DNA in complex with RuvA. In the full resolvosome a probable DNA-RuvA(4)-RuvB(12)-RuvC(2) complex forms which resolves the HJ. Mg(2+) is required as a cofactor.

It is found in the cytoplasm. It catalyses the reaction Endonucleolytic cleavage at a junction such as a reciprocal single-stranded crossover between two homologous DNA duplexes (Holliday junction).. Its function is as follows. The RuvA-RuvB-RuvC complex processes Holliday junction (HJ) DNA during genetic recombination and DNA repair. Endonuclease that resolves HJ intermediates. Cleaves cruciform DNA by making single-stranded nicks across the HJ at symmetrical positions within the homologous arms, yielding a 5'-phosphate and a 3'-hydroxyl group; requires a central core of homology in the junction. The consensus cleavage sequence is 5'-(A/T)TT(C/G)-3'. Cleavage occurs on the 3'-side of the TT dinucleotide at the point of strand exchange. HJ branch migration catalyzed by RuvA-RuvB allows RuvC to scan DNA until it finds its consensus sequence, where it cleaves and resolves the cruciform DNA. In Mycobacterium ulcerans (strain Agy99), this protein is Crossover junction endodeoxyribonuclease RuvC.